Here is a 72-residue protein sequence, read N- to C-terminus: Translation initiation factor IF-1 (72 aa).

The S1-like domain occupies 1–72 (MAKEDTLEFP…TKGRINYRFK (72 aa)).

This sequence belongs to the IF-1 family. As to quaternary structure, component of the 30S ribosomal translation pre-initiation complex which assembles on the 30S ribosome in the order IF-2 and IF-3, IF-1 and N-formylmethionyl-tRNA(fMet); mRNA recruitment can occur at any time during PIC assembly.

It localises to the cytoplasm. Its function is as follows. One of the essential components for the initiation of protein synthesis. Stabilizes the binding of IF-2 and IF-3 on the 30S subunit to which N-formylmethionyl-tRNA(fMet) subsequently binds. Helps modulate mRNA selection, yielding the 30S pre-initiation complex (PIC). Upon addition of the 50S ribosomal subunit IF-1, IF-2 and IF-3 are released leaving the mature 70S translation initiation complex. This is Translation initiation factor IF-1 from Roseobacter denitrificans (strain ATCC 33942 / OCh 114) (Erythrobacter sp. (strain OCh 114)).